We begin with the raw amino-acid sequence, 493 residues long: Glutamyl-tRNA(Gln) amidotransferase subunit A (493 aa).

Residues K78 and S158 each act as charge relay system in the active site. Residue S182 is the Acyl-ester intermediate of the active site.

Belongs to the amidase family. GatA subfamily. As to quaternary structure, heterotrimer of A, B and C subunits.

It carries out the reaction L-glutamyl-tRNA(Gln) + L-glutamine + ATP + H2O = L-glutaminyl-tRNA(Gln) + L-glutamate + ADP + phosphate + H(+). In terms of biological role, allows the formation of correctly charged Gln-tRNA(Gln) through the transamidation of misacylated Glu-tRNA(Gln) in organisms which lack glutaminyl-tRNA synthetase. The reaction takes place in the presence of glutamine and ATP through an activated gamma-phospho-Glu-tRNA(Gln). This is Glutamyl-tRNA(Gln) amidotransferase subunit A from Methylorubrum extorquens (strain PA1) (Methylobacterium extorquens).